The following is a 407-amino-acid chain: Multifunctional CCA protein (407 aa).

Residues Gly-8 and Arg-11 each contribute to the ATP site. Gly-8 and Arg-11 together coordinate CTP. The Mg(2+) site is built by Asp-21 and Asp-23. The ATP site is built by Arg-91, Arg-137, and Arg-140. CTP is bound by residues Arg-91, Arg-137, and Arg-140. Positions 228–329 constitute an HD domain; it reads TGMHTLMVSQ…IKIFDKMDLW (102 aa).

This sequence belongs to the tRNA nucleotidyltransferase/poly(A) polymerase family. Bacterial CCA-adding enzyme type 1 subfamily. Monomer. Can also form homodimers and oligomers. Mg(2+) is required as a cofactor. Ni(2+) serves as cofactor.

It catalyses the reaction a tRNA precursor + 2 CTP + ATP = a tRNA with a 3' CCA end + 3 diphosphate. The enzyme catalyses a tRNA with a 3' CCA end + 2 CTP + ATP = a tRNA with a 3' CCACCA end + 3 diphosphate. Catalyzes the addition and repair of the essential 3'-terminal CCA sequence in tRNAs without using a nucleic acid template. Adds these three nucleotides in the order of C, C, and A to the tRNA nucleotide-73, using CTP and ATP as substrates and producing inorganic pyrophosphate. tRNA 3'-terminal CCA addition is required both for tRNA processing and repair. Also involved in tRNA surveillance by mediating tandem CCA addition to generate a CCACCA at the 3' terminus of unstable tRNAs. While stable tRNAs receive only 3'-terminal CCA, unstable tRNAs are marked with CCACCA and rapidly degraded. In Aliivibrio salmonicida (strain LFI1238) (Vibrio salmonicida (strain LFI1238)), this protein is Multifunctional CCA protein.